A 165-amino-acid chain; its full sequence is 3-isopropylmalate dehydratase small subunit (165 aa).

This sequence belongs to the LeuD family. LeuD type 2 subfamily. As to quaternary structure, heterodimer of LeuC and LeuD.

It carries out the reaction (2R,3S)-3-isopropylmalate = (2S)-2-isopropylmalate. Its pathway is amino-acid biosynthesis; L-leucine biosynthesis; L-leucine from 3-methyl-2-oxobutanoate: step 2/4. Its function is as follows. Catalyzes the isomerization between 2-isopropylmalate and 3-isopropylmalate, via the formation of 2-isopropylmaleate. The sequence is that of 3-isopropylmalate dehydratase small subunit from Hydrogenobaculum sp. (strain Y04AAS1).